Reading from the N-terminus, the 1059-residue chain is Zinc finger protein 865 (1059 aa).

3 disordered regions span residues 1–24 (MEANPAGSGAGGGGSSGIGGEDGV), 58–142 (LPCA…DAAF), and 161–206 (NLKR…CDPT). Gly residues predominate over residues 8–21 (SGAGGGGSSGIGGE). Residues 61-78 (APGPPPQPPPQPPPPQYD) show a composition bias toward pro residues. The span at 93–119 (SSSSSSSSSSSSSSSSSSSSSSSSSQA) shows a compositional bias: low complexity. Composition is skewed to pro residues over residues 124–137 (PPLPPAFGAPPPPL) and 183–198 (APGPLPAPSQTPPGPP). 2 consecutive C2H2-type zinc fingers follow at residues 224-246 (FPCGVCQKSFKQSSHLVQHMLVH) and 252-274 (YECGVCGRTYNHVSSLIRHRRCH). The segment at 275-342 (KDVPPAAGGP…PAGVGVPPPA (68 aa)) is disordered. Residues 281 to 296 (AGGPPQPGPHLPPLGL) are compositionally biased toward pro residues. Composition is skewed to low complexity over residues 297-316 (PAPAASAATAAAPSTVSSGP) and 324-337 (APSADGSAAPAGVG). 4 consecutive C2H2-type zinc fingers follow at residues 350-372 (FACPLCWKVFKKPSHLHQHQIIH), 378-400 (FSCSVCSKSFNRRESLKRHVKTH), 407-429 (LPCGICGKAFRDASYLLKHQAAH), and 441-463 (YPCDLCGKSYSAPQSLLRHKAAH). The interval 461-503 (AAHAPPAAAAEAPKDGAASAPQPPPTFPPGPYLLPPDPPTTDS) is disordered. Positions 463 to 480 (HAPPAAAAEAPKDGAASA) are enriched in low complexity. The span at 481–499 (PQPPPTFPPGPYLLPPDPP) shows a compositional bias: pro residues. C2H2-type zinc fingers lie at residues 550 to 572 (FCCGICGRGFGRRETLKRHERIH), 578 to 600 (HQCPVCGKRFRESFHLSKHHVVH), 606 to 628 (YKCELCGKVFGYPQSLTRHRQVH), 669 to 691 (YACSDCGEHFPDLFHVMSHKEVH), and 697 to 719 (YGCDACGKTFGFIENLMWHKLVH). The disordered stretch occupies residues 726-747 (LLPPAPGGLQPPDGSSGTDAAS). 9 C2H2-type zinc fingers span residues 792 to 814 (FSCATCGQSFKHFLGLVTHKYVH), 820 to 842 (LGCGLCGQSFAGAYDLLLHRRSH), 848 to 870 (FRCPVCGKRFWEAALLMRHQRCH), 876 to 898 (YRCGVCGRGFLRSWYLRQHRVVH), 904 to 926 (FKCGVCAKRFAQSSSLAEHRRLH), 932 to 954 (QRCSACGKTFRYRSNLLEHQRLH), 960 to 982 (YRCEHCGKGFFYLSSVLRHQRAH), 989 to 1011 (LRCPACLKAFKDPGYFRKHLAAH), and 1017 to 1039 (FRCSSCGEGFANTYGLKKHRLAH). Lys802 is covalently cross-linked (Glycyl lysine isopeptide (Lys-Gly) (interchain with G-Cter in SUMO2)). Lys1040 is covalently cross-linked (Glycyl lysine isopeptide (Lys-Gly) (interchain with G-Cter in SUMO2)).

Belongs to the krueppel C2H2-type zinc-finger protein family.

Its subcellular location is the nucleus. In terms of biological role, may be involved in transcriptional regulation. In Homo sapiens (Human), this protein is Zinc finger protein 865 (ZNF865).